A 1383-amino-acid chain; its full sequence is DNA-directed RNA polymerase subunit beta (1383 aa).

The protein belongs to the RNA polymerase beta chain family. The RNAP catalytic core consists of 2 alpha, 1 beta, 1 beta' and 1 omega subunit. When a sigma factor is associated with the core the holoenzyme is formed, which can initiate transcription.

The catalysed reaction is RNA(n) + a ribonucleoside 5'-triphosphate = RNA(n+1) + diphosphate. In terms of biological role, DNA-dependent RNA polymerase catalyzes the transcription of DNA into RNA using the four ribonucleoside triphosphates as substrates. This is DNA-directed RNA polymerase subunit beta from Bartonella quintana (strain Toulouse) (Rochalimaea quintana).